The following is a 142-amino-acid chain: Large ribosomal subunit protein uL13 (142 aa).

The protein belongs to the universal ribosomal protein uL13 family. As to quaternary structure, part of the 50S ribosomal subunit.

In terms of biological role, this protein is one of the early assembly proteins of the 50S ribosomal subunit, although it is not seen to bind rRNA by itself. It is important during the early stages of 50S assembly. This chain is Large ribosomal subunit protein uL13, found in Teredinibacter turnerae (strain ATCC 39867 / T7901).